The following is a 346-amino-acid chain: MRILQETSLAAFHTFGIESQAYALIEAESVDDLLLIWRDKQYQTLPKLVLGKGSNLLFCDDFSGVVVLNRIKGITVNETQESYLLHVGAGEDWHGFVQWTIEHNMPGLENLALIPGCVGSSPIQNIGAYGVELQDICQYVDILNIDSGEVSRLSRKECQFGYRDSVFKHELKETHIIVAVGFTLKKEWEPKTTYGPLAELNKTTVAAIDVFNAVCRIRQSKLPDPQVLGNAGSFFKNPVITQSIKDALLYQYPQMPNYKVSNLEYKLAAGWLIDQCDLKGMQIGGAKVHEQQALVLVNTGNATARDVLLLAQHVVNAVNDKFGVLLEHEVRFMGASKETTLSEVLA.

An FAD-binding PCMH-type domain is found at 17-187 (IESQAYALIE…VAVGFTLKKE (171 aa)). Arg-163 is a catalytic residue. The Proton donor role is filled by Ser-233. Glu-329 is a catalytic residue.

The protein belongs to the MurB family. FAD is required as a cofactor.

The protein resides in the cytoplasm. The enzyme catalyses UDP-N-acetyl-alpha-D-muramate + NADP(+) = UDP-N-acetyl-3-O-(1-carboxyvinyl)-alpha-D-glucosamine + NADPH + H(+). It functions in the pathway cell wall biogenesis; peptidoglycan biosynthesis. Its function is as follows. Cell wall formation. The chain is UDP-N-acetylenolpyruvoylglucosamine reductase from Photobacterium profundum (strain SS9).